Reading from the N-terminus, the 904-residue chain is Translation initiation factor IF-2 (904 aa).

Disordered stretches follow at residues 103 to 122 (YVKS…PDEE), 137 to 252 (NLEE…MVAG), and 267 to 315 (HLSA…FERP). Basic and acidic residues predominate over residues 137-177 (NLEEQQRLAESDRVRDEAIQRKREEEQAAKDRAEAERKAAE). Low complexity-rich tracts occupy residues 178–230 (EAAA…AAPA) and 280–293 (RGKP…SSSR). In terms of domain architecture, tr-type G spans 403–572 (SRPPVVTIMG…SLQAEVLELK (170 aa)). The interval 412 to 419 (GHVDHGKT) is G1. 412-419 (GHVDHGKT) is a GTP binding site. Residues 437 to 441 (GITQH) form a G2 region. A G3 region spans residues 458–461 (DTPG). Residues 458–462 (DTPGH) and 512–515 (NKID) contribute to the GTP site. Residues 512 to 515 (NKID) are G4. Residues 548–550 (SAK) are G5.

This sequence belongs to the TRAFAC class translation factor GTPase superfamily. Classic translation factor GTPase family. IF-2 subfamily.

It is found in the cytoplasm. In terms of biological role, one of the essential components for the initiation of protein synthesis. Protects formylmethionyl-tRNA from spontaneous hydrolysis and promotes its binding to the 30S ribosomal subunits. Also involved in the hydrolysis of GTP during the formation of the 70S ribosomal complex. The sequence is that of Translation initiation factor IF-2 from Xanthomonas euvesicatoria pv. vesicatoria (strain 85-10) (Xanthomonas campestris pv. vesicatoria).